Here is a 428-residue protein sequence, read N- to C-terminus: Kynureninase (428 aa).

Pyridoxal 5'-phosphate is bound by residues Thr104, Thr105, 132 to 135 (FPSD), Asp213, His216, and Tyr238. The residue at position 239 (Lys239) is an N6-(pyridoxal phosphate)lysine. 2 residues coordinate pyridoxal 5'-phosphate: Trp267 and Thr295.

This sequence belongs to the kynureninase family. In terms of assembly, homodimer. Requires pyridoxal 5'-phosphate as cofactor.

It catalyses the reaction L-kynurenine + H2O = anthranilate + L-alanine + H(+). The catalysed reaction is 3-hydroxy-L-kynurenine + H2O = 3-hydroxyanthranilate + L-alanine + H(+). Its pathway is amino-acid degradation; L-kynurenine degradation; L-alanine and anthranilate from L-kynurenine: step 1/1. The protein operates within cofactor biosynthesis; NAD(+) biosynthesis; quinolinate from L-kynurenine: step 2/3. Catalyzes the cleavage of L-kynurenine (L-Kyn) and L-3-hydroxykynurenine (L-3OHKyn) into anthranilic acid (AA) and 3-hydroxyanthranilic acid (3-OHAA), respectively. This chain is Kynureninase, found in Geobacillus thermodenitrificans (strain NG80-2).